Reading from the N-terminus, the 374-residue chain is Lipopolysaccharide glucosyltransferase WaaG (374 aa).

Positions 15 and 19 each coordinate UDP-alpha-D-glucose. The interval 103–132 (YAEKVAQEKGFLYRLTSRYRHYAAFERATF) is membrane-interacting region. Arg-173, Arg-208, Lys-209, Arg-261, Glu-281, Ala-283, Gly-284, Ile-285, Val-286, and Glu-289 together coordinate UDP-alpha-D-glucose.

Belongs to the glycosyltransferase group 1 family. Glycosyltransferase 4 subfamily.

The protein resides in the cell inner membrane. It functions in the pathway bacterial outer membrane biogenesis; LPS core biosynthesis. Inhibited by divalent metal ions such as Mg(2+), Mn(2+), Ca(2+), Zn(2+), Co(2+), Ni(2+) and Cu(2+). Its function is as follows. Glucosyltransferase involved in the biosynthesis of the core oligosaccharide region of lipopolysaccharide (LPS). Catalyzes the addition of the first outer-core glucose from UDP-glucose to the inner-core heptose II. Cannot use other sugar donors, such as UDP-galactose, UDP-glucuronic acid, UDP-galacuronic acid, GDP-mannose, ADP-glucose and GDP-glucose. In the absence of a lipid acceptor, can slowly hydrolyze UDP-glucose. This chain is Lipopolysaccharide glucosyltransferase WaaG, found in Escherichia coli (strain K12).